The following is a 503-amino-acid chain: Probable cytosol aminopeptidase (503 aa).

Mn(2+)-binding residues include Lys-274 and Asp-279. Residue Lys-286 is part of the active site. Asp-297, Asp-356, and Glu-358 together coordinate Mn(2+). Residue Arg-360 is part of the active site.

Belongs to the peptidase M17 family. Mn(2+) is required as a cofactor.

The protein localises to the cytoplasm. The enzyme catalyses Release of an N-terminal amino acid, Xaa-|-Yaa-, in which Xaa is preferably Leu, but may be other amino acids including Pro although not Arg or Lys, and Yaa may be Pro. Amino acid amides and methyl esters are also readily hydrolyzed, but rates on arylamides are exceedingly low.. It carries out the reaction Release of an N-terminal amino acid, preferentially leucine, but not glutamic or aspartic acids.. Functionally, presumably involved in the processing and regular turnover of intracellular proteins. Catalyzes the removal of unsubstituted N-terminal amino acids from various peptides. The sequence is that of Probable cytosol aminopeptidase from Paraburkholderia phymatum (strain DSM 17167 / CIP 108236 / LMG 21445 / STM815) (Burkholderia phymatum).